A 425-amino-acid chain; its full sequence is UPF0761 membrane protein xcc-b100_3490 (425 aa).

6 helical membrane-spanning segments follow: residues 48-68 (VFAL…FPAF), 105-125 (FTVA…HSIE), 154-174 (GTML…LPLF), 182-202 (LAEF…IVLI), 216-236 (ALPG…GFGF), and 250-270 (ALSA…SVLL).

Belongs to the UPF0761 family.

The protein resides in the cell inner membrane. The chain is UPF0761 membrane protein xcc-b100_3490 from Xanthomonas campestris pv. campestris (strain B100).